Reading from the N-terminus, the 422-residue chain is Serine--tRNA ligase (422 aa).

Residue 227 to 229 (TSE) coordinates L-serine. ATP contacts are provided by residues 258–260 (RRE) and Val-274. L-serine is bound at residue Glu-281. 345 to 348 (ELTS) serves as a coordination point for ATP. Position 380 (Thr-380) interacts with L-serine.

This sequence belongs to the class-II aminoacyl-tRNA synthetase family. Type-1 seryl-tRNA synthetase subfamily. Homodimer. The tRNA molecule binds across the dimer.

The protein localises to the cytoplasm. It carries out the reaction tRNA(Ser) + L-serine + ATP = L-seryl-tRNA(Ser) + AMP + diphosphate + H(+). The catalysed reaction is tRNA(Sec) + L-serine + ATP = L-seryl-tRNA(Sec) + AMP + diphosphate + H(+). It functions in the pathway aminoacyl-tRNA biosynthesis; selenocysteinyl-tRNA(Sec) biosynthesis; L-seryl-tRNA(Sec) from L-serine and tRNA(Sec): step 1/1. Functionally, catalyzes the attachment of serine to tRNA(Ser). Is also able to aminoacylate tRNA(Sec) with serine, to form the misacylated tRNA L-seryl-tRNA(Sec), which will be further converted into selenocysteinyl-tRNA(Sec). In Thermobifida fusca (strain YX), this protein is Serine--tRNA ligase.